A 1036-amino-acid polypeptide reads, in one-letter code: Mitogen-activated protein kinase kinase kinase 21 (1036 aa).

The interval 1 to 36 is disordered; sequence MALRGAAGATDTPVSSAGGAPGGSASSSSTSSGGSA. Positions 15 to 36 are enriched in low complexity; sequence SSAGGAPGGSASSSSTSSGGSA. Residues 38 to 102 form the SH3 domain; the sequence is AGAGLWAALY…PANYVAPCRP (65 aa). The Protein kinase domain occupies 124–401; sequence LELKELIGAG…ALILEQLTAI (278 aa). ATP is bound by residues 130–138 and lysine 151; that span reads IGAGGFGQV. Aspartate 263 serves as the catalytic Proton acceptor. Threonine 299 carries the post-translational modification Phosphothreonine; by autocatalysis. Serine 303 is subject to Phosphoserine; by autocatalysis and MAP4K1. Leucine-zipper regions lie at residues 425–446 and 460–481; these read IQQM…EEEL and LKRR…ELNI. The tract at residues 517–551 is disordered; it reads SDFQHKITVQASPNLDKRRSLNSSSSSPPSSPTMM. Residues serine 528, serine 543, and serine 547 each carry the phosphoserine modification. Position 592 is a phosphothreonine (threonine 592). At serine 614 the chain carries Phosphoserine. Basic and acidic residues predominate over residues 748–763; that stretch reads AEEPLPKEEKKKREGI. Disordered regions lie at residues 748-791 and 923-954; these read AEEP…SSPP and PHSH…RSRS.

It belongs to the protein kinase superfamily. STE Ser/Thr protein kinase family. MAP kinase kinase kinase subfamily. As to quaternary structure, homodimer. Interacts with TLR4. Mg(2+) is required as a cofactor. Autophosphorylation on serine and threonine residues within the activation loop plays a role in enzyme activation.

The enzyme catalyses L-seryl-[protein] + ATP = O-phospho-L-seryl-[protein] + ADP + H(+). It carries out the reaction L-threonyl-[protein] + ATP = O-phospho-L-threonyl-[protein] + ADP + H(+). Its activity is regulated as follows. Homodimerization via the leucine zipper domains is required for autophosphorylation and subsequent activation. In terms of biological role, negative regulator of TLR4 signaling. Does not activate JNK1/MAPK8 pathway, p38/MAPK14, nor ERK2/MAPK1 pathways. The chain is Mitogen-activated protein kinase kinase kinase 21 from Homo sapiens (Human).